Here is a 150-residue protein sequence, read N- to C-terminus: uncharacterized protein (150 aa).

Helical transmembrane passes span 12–30 (IVQRIISLLTIILLAYFLF), 40–62 (RLLSLATIVLLASFLFIIFLVLF), 74–96 (IRRTIAIVTTSFYFGTLSMVLSG), and 106–128 (ALIDGLKWAFMVVVAFYFGSRAV).

It localises to the cell membrane. This is an uncharacterized protein from Archaeoglobus fulgidus (strain ATCC 49558 / DSM 4304 / JCM 9628 / NBRC 100126 / VC-16).